The sequence spans 782 residues: Ribosome biogenesis protein ERB1 (782 aa).

2 disordered regions span residues 1–123 (MGSK…RIEK) and 339–361 (PEEY…EDRE). Residues 35–86 (SEDEEDYLPSDDDDDVEDSENEGTGASEDDDDDDDDDDILSDDIPSDVDSEE) show a composition bias toward acidic residues. Basic and acidic residues predominate over residues 105–123 (VDPKREEDDGADRNYRIEK). WD repeat units follow at residues 433 to 472 (GHEG…QVWS), 476 to 516 (NSEE…VTPA), 567 to 609 (TVRS…TQIP), 612 to 650 (KLSG…LVKV), 653 to 692 (PGAK…RPYK), 696 to 736 (FHGQ…DQLE), and 752 to 782 (VSKL…RLWM).

It belongs to the WD repeat BOP1/ERB1 family. In terms of assembly, component of the NOP7 complex, composed of ERB1, NOP7 and YTM1. The complex is held together by ERB1, which interacts with NOP7 via its N-terminal domain and with YTM1 via a high-affinity interaction between the seven-bladed beta-propeller domains of the 2 proteins. The NOP7 complex associates with the 66S pre-ribosome.

It is found in the nucleus. The protein localises to the nucleolus. Its subcellular location is the nucleoplasm. Its function is as follows. Component of the NOP7 complex, which is required for maturation of the 25S and 5.8S ribosomal RNAs and formation of the 60S ribosome. In Chaetomium globosum (strain ATCC 6205 / CBS 148.51 / DSM 1962 / NBRC 6347 / NRRL 1970) (Soil fungus), this protein is Ribosome biogenesis protein ERB1.